Here is a 463-residue protein sequence, read N- to C-terminus: Quinolone resistance protein NorB (463 aa).

The next 14 membrane-spanning stretches (helical) occupy residues 17–37 (IGIVLSVITFWLFAQSLVNVV), 53–73 (IAVSITALFSGMFVVGAGGLA), 86–106 (IILNILGSLLIIISNIPLLLI), 107–127 (IGRLIQGLSAACIMPATLSII), 142–162 (YWSIGSWGGSGVCSFFGGAVA), 165–185 (LGWRWIFILSIIISLIALFLI), 201–221 (FDIKGLVLLVIMLLSLNILIT), 230–250 (SLLFITLLAITIGSFSLFIVL), 273–293 (TASNFLLNGVAGTLIVANTFV), 299–319 (YSSLQAGSLSITYLVMVLIMI), 334–354 (PMLIGTGVLIVGECLISLTFL), 357–377 (ILYVICCIIGYLFFGLGLGIY), 403–423 (MASALGGAFGVALSGAVYAIV), and 435–455 (IALWLNAGMGILSFVIILLLV).

The protein belongs to the major facilitator superfamily. TCR/Tet family.

The protein resides in the cell membrane. Multidrug efflux pump that acts independently of NorA and is one of the factors that confers resistance against diverse quinolones and chemical compounds. The chain is Quinolone resistance protein NorB (norB) from Staphylococcus aureus (strain MSSA476).